Reading from the N-terminus, the 176-residue chain is Ribosome maturation factor RimM (176 aa).

Positions E92–A165 constitute a PRC barrel domain.

Belongs to the RimM family. Binds ribosomal protein uS19.

The protein resides in the cytoplasm. In terms of biological role, an accessory protein needed during the final step in the assembly of 30S ribosomal subunit, possibly for assembly of the head region. Essential for efficient processing of 16S rRNA. May be needed both before and after RbfA during the maturation of 16S rRNA. It has affinity for free ribosomal 30S subunits but not for 70S ribosomes. The sequence is that of Ribosome maturation factor RimM from Paramagnetospirillum magneticum (strain ATCC 700264 / AMB-1) (Magnetospirillum magneticum).